Consider the following 334-residue polypeptide: D-alanine--D-alanine ligase (334 aa).

Residues 110–306 enclose the ATP-grasp domain; that stretch reads KHVLKSLGID…FDHVVDLIVQ (197 aa). 138 to 190 lines the ATP pocket; the sequence is LPYPFVIKPVRGGSTIGVHAIFSKSEYLDLSAHADTLEDRMIVEEYVSGQEVQ. Mg(2+)-binding residues include Asp-258, Glu-272, and Asn-274.

This sequence belongs to the D-alanine--D-alanine ligase family. The cofactor is Mg(2+). Mn(2+) serves as cofactor.

It is found in the cytoplasm. The enzyme catalyses 2 D-alanine + ATP = D-alanyl-D-alanine + ADP + phosphate + H(+). Its pathway is cell wall biogenesis; peptidoglycan biosynthesis. Its function is as follows. Cell wall formation. In Anaplasma marginale (strain Florida), this protein is D-alanine--D-alanine ligase.